Reading from the N-terminus, the 361-residue chain is Phosphoserine aminotransferase (361 aa).

Arginine 42 serves as a coordination point for L-glutamate. Pyridoxal 5'-phosphate is bound by residues 76–77, tryptophan 102, threonine 153, aspartate 173, and glutamine 196; that span reads AR. At lysine 197 the chain carries N6-(pyridoxal phosphate)lysine. Pyridoxal 5'-phosphate is bound at residue 238 to 239; the sequence is NT.

This sequence belongs to the class-V pyridoxal-phosphate-dependent aminotransferase family. SerC subfamily. In terms of assembly, homodimer. Requires pyridoxal 5'-phosphate as cofactor.

The protein resides in the cytoplasm. It catalyses the reaction O-phospho-L-serine + 2-oxoglutarate = 3-phosphooxypyruvate + L-glutamate. It carries out the reaction 4-(phosphooxy)-L-threonine + 2-oxoglutarate = (R)-3-hydroxy-2-oxo-4-phosphooxybutanoate + L-glutamate. Its pathway is amino-acid biosynthesis; L-serine biosynthesis; L-serine from 3-phospho-D-glycerate: step 2/3. The protein operates within cofactor biosynthesis; pyridoxine 5'-phosphate biosynthesis; pyridoxine 5'-phosphate from D-erythrose 4-phosphate: step 3/5. Functionally, catalyzes the reversible conversion of 3-phosphohydroxypyruvate to phosphoserine and of 3-hydroxy-2-oxo-4-phosphonooxybutanoate to phosphohydroxythreonine. The protein is Phosphoserine aminotransferase of Buchnera aphidicola subsp. Acyrthosiphon pisum (strain Tuc7).